The primary structure comprises 110 residues: Secreted RxLR effector protein 89 (110 aa).

An N-terminal signal peptide occupies residues 1–22 (MTSVVIVVSVAVLLGVLVITDS). A glycan (N-linked (GlcNAc...) asparagine) is linked at N29. The RxLR-dEER signature appears at 61-74 (RHLRTILQWWQERR).

Belongs to the RxLR effector family.

The protein localises to the secreted. It is found in the host nucleus. Its subcellular location is the host cytoplasm. In terms of biological role, secreted effector that completely suppresses the host cell death induced by cell death-inducing proteins. This is Secreted RxLR effector protein 89 from Plasmopara viticola (Downy mildew of grapevine).